We begin with the raw amino-acid sequence, 257 residues long: Probable enoyl-CoA hydratase echA8 (257 aa).

Belongs to the enoyl-CoA hydratase/isomerase family.

It catalyses the reaction a (3S)-3-hydroxyacyl-CoA = a (2E)-enoyl-CoA + H2O. The catalysed reaction is a 4-saturated-(3S)-3-hydroxyacyl-CoA = a (3E)-enoyl-CoA + H2O. Could possibly oxidize fatty acids using specific components. The chain is Probable enoyl-CoA hydratase echA8 (echA8) from Mycobacterium leprae (strain TN).